Reading from the N-terminus, the 663-residue chain is Bifunctional polymyxin resistance protein ArnA (663 aa).

Positions 1 to 307 are formyltransferase ArnAFT; that stretch reads MSPKAVVFAY…EFGLVEGSQL (307 aa). H106 acts as the Proton donor; for formyltransferase activity in catalysis. Residues R116 and 138-142 each bind (6R)-10-formyltetrahydrofolate; that span reads VKRAD. The segment at 317-663 is dehydrogenase ArnADH; sequence RRTRVLILGV…EAMAEKADMR (347 aa). Residues D350 and 371-372 each bind NAD(+); that span reads DI. Residues A396, Y401, and 435-436 contribute to the UDP-alpha-D-glucuronate site; that span reads TS. E437 (proton acceptor; for decarboxylase activity) is an active-site residue. UDP-alpha-D-glucuronate is bound by residues R463, N494, 528–537, and Y615; that span reads RLVDGGAQKR. R621 functions as the Proton donor; for decarboxylase activity in the catalytic mechanism.

The protein in the N-terminal section; belongs to the Fmt family. UDP-L-Ara4N formyltransferase subfamily. This sequence in the C-terminal section; belongs to the NAD(P)-dependent epimerase/dehydratase family. UDP-glucuronic acid decarboxylase subfamily. As to quaternary structure, homohexamer, formed by a dimer of trimers.

It carries out the reaction UDP-alpha-D-glucuronate + NAD(+) = UDP-beta-L-threo-pentopyranos-4-ulose + CO2 + NADH. The enzyme catalyses UDP-4-amino-4-deoxy-beta-L-arabinose + (6R)-10-formyltetrahydrofolate = UDP-4-deoxy-4-formamido-beta-L-arabinose + (6S)-5,6,7,8-tetrahydrofolate + H(+). It participates in nucleotide-sugar biosynthesis; UDP-4-deoxy-4-formamido-beta-L-arabinose biosynthesis; UDP-4-deoxy-4-formamido-beta-L-arabinose from UDP-alpha-D-glucuronate: step 1/3. It functions in the pathway nucleotide-sugar biosynthesis; UDP-4-deoxy-4-formamido-beta-L-arabinose biosynthesis; UDP-4-deoxy-4-formamido-beta-L-arabinose from UDP-alpha-D-glucuronate: step 3/3. The protein operates within bacterial outer membrane biogenesis; lipopolysaccharide biosynthesis. Bifunctional enzyme that catalyzes the oxidative decarboxylation of UDP-glucuronic acid (UDP-GlcUA) to UDP-4-keto-arabinose (UDP-Ara4O) and the addition of a formyl group to UDP-4-amino-4-deoxy-L-arabinose (UDP-L-Ara4N) to form UDP-L-4-formamido-arabinose (UDP-L-Ara4FN). The modified arabinose is attached to lipid A and is required for resistance to polymyxin and cationic antimicrobial peptides. This Pseudomonas savastanoi pv. phaseolicola (strain 1448A / Race 6) (Pseudomonas syringae pv. phaseolicola (strain 1448A / Race 6)) protein is Bifunctional polymyxin resistance protein ArnA.